Here is a 328-residue protein sequence, read N- to C-terminus: Flotillin-like protein FloA (328 aa).

Helical transmembrane passes span 9–29 (LLIT…VPVG) and 30–50 (LWIS…IGMR).

Belongs to the flotillin-like FloA family. Homooligomerizes.

The protein resides in the cell membrane. It is found in the membrane raft. In terms of biological role, found in functional membrane microdomains (FMM) that may be equivalent to eukaryotic membrane rafts. FMMs are highly dynamic and increase in number as cells age. Flotillins are thought to be important factors in membrane fluidity. This Exiguobacterium sp. (strain ATCC BAA-1283 / AT1b) protein is Flotillin-like protein FloA.